The sequence spans 393 residues: Formate-dependent phosphoribosylglycinamide formyltransferase (393 aa).

N(1)-(5-phospho-beta-D-ribosyl)glycinamide-binding positions include 22 to 23 (EL) and Glu82. ATP-binding positions include Arg114, Lys155, 160–165 (SSGHGQ), 195–198 (EGFI), and Glu203. The region spanning 119–308 (RLAAEELGLP…QFALHARAIL (190 aa)) is the ATP-grasp domain. Glu267 and Glu279 together coordinate Mg(2+). N(1)-(5-phospho-beta-D-ribosyl)glycinamide-binding positions include Asp286, Lys356, and 363 to 364 (RR).

Belongs to the PurK/PurT family. Homodimer.

The catalysed reaction is N(1)-(5-phospho-beta-D-ribosyl)glycinamide + formate + ATP = N(2)-formyl-N(1)-(5-phospho-beta-D-ribosyl)glycinamide + ADP + phosphate + H(+). The protein operates within purine metabolism; IMP biosynthesis via de novo pathway; N(2)-formyl-N(1)-(5-phospho-D-ribosyl)glycinamide from N(1)-(5-phospho-D-ribosyl)glycinamide (formate route): step 1/1. Involved in the de novo purine biosynthesis. Catalyzes the transfer of formate to 5-phospho-ribosyl-glycinamide (GAR), producing 5-phospho-ribosyl-N-formylglycinamide (FGAR). Formate is provided by PurU via hydrolysis of 10-formyl-tetrahydrofolate. This is Formate-dependent phosphoribosylglycinamide formyltransferase from Haemophilus ducreyi (strain 35000HP / ATCC 700724).